The chain runs to 619 residues: DEAD-box ATP-dependent RNA helicase 14 (619 aa).

At alanine 2 the chain carries N-acetylalanine. One can recognise a WW domain in the interval 17–51 (HTLPKPWKGLIDDRTGYLYFWNPETNVTQYEKPTP). Residues 47 to 139 (EKPTPSLPPK…APASELSPEA (93 aa)) are disordered. Over residues 61 to 71 (VSVSSSVQVQQ) the composition is skewed to low complexity. The span at 78–93 (PKDDDKYSRGSERVSR) shows a compositional bias: basic and acidic residues. Low complexity predominate over residues 125-139 (PLPSSAPASELSPEA). Serine 136 carries the post-translational modification Phosphoserine. The short motif at 158–186 (MSFEATGFPPELLREVLSAGFSAPTPIQA) is the Q motif element. A Helicase ATP-binding domain is found at 189–363 (WPIAMQGRDI…ADLLVNPAQV (175 aa)). An ATP-binding site is contributed by 202–209 (AKTGSGKT). Positions 311-314 (DEAD) match the DEAD box motif. The region spanning 392-536 (RLEQILRSQE…RVPPQIREMA (145 aa)) is the Helicase C-terminal domain. The disordered stretch occupies residues 528 to 619 (VPPQIREMAT…FHETMMMKHR (92 aa)). The span at 552 to 568 (PSGGRGRGGDSGYGGRG) shows a compositional bias: gly residues. Composition is skewed to basic and acidic residues over residues 582 to 595 (GRER…ERFN) and 609 to 619 (SFHETMMMKHR).

This sequence belongs to the DEAD box helicase family. DDX5/DBP2 subfamily. In terms of tissue distribution, ubiquitous. Preferentially expressed in flowers and roots.

It localises to the nucleus. The catalysed reaction is ATP + H2O = ADP + phosphate + H(+). In terms of biological role, ATP-dependent RNA helicase involved nonsense-mediated mRNA decay and ribosome biogenesis through rRNA processing. The sequence is that of DEAD-box ATP-dependent RNA helicase 14 (RH14) from Arabidopsis thaliana (Mouse-ear cress).